The sequence spans 208 residues: Porimin (208 aa).

The N-terminal stretch at 1–26 (MGLGARGAWAALLLGTLQVLALLGAA) is a signal peptide. Topologically, residues 27 to 166 (HESAAMAASA…EAKKGSKFDT (140 aa)) are extracellular. The segment covering 42–57 (GLPHNSSANSTETLQH) has biased composition (polar residues). The interval 42-125 (GLPHNSSANS…PKTTSVSQNT (84 aa)) is disordered. 7 N-linked (GlcNAc...) asparagine glycosylation sites follow: Asn46, Asn50, Asn64, Asn68, Asn83, Asn96, and Asn106. The span at 65 to 107 (ETSNSTVKPPTSVASDSSNTTVTTMKPTAASNTTTPGMVSTNM) shows a compositional bias: polar residues. Low complexity predominate over residues 108–122 (TSTTLKSTPKTTSVS). Asn124 and Asn138 each carry an N-linked (GlcNAc...) asparagine glycan. The chain crosses the membrane as a helical span at residues 167 to 187 (GSFVGGIVLTLGVLSILYIGC). At 188–208 (KMYYSRRGIRYRTIDEHDAII) the chain is on the cytoplasmic side.

The protein belongs to the CD164 family. In terms of tissue distribution, ubiquitous. Not expressed in ovary. Expressed in keratinocytes.

The protein localises to the membrane. In terms of biological role, implicated in oncotic cell death, characterized by cell swelling, organelle swelling, vacuolization and increased membrane permeability. This Homo sapiens (Human) protein is Porimin (TMEM123).